The chain runs to 533 residues: Flavin-dependent halogenase gsfI (533 aa).

Residues glycine 14, glycine 17, and glutamate 47 each coordinate FAD. Chloride contacts are provided by serine 331 and glycine 332.

Belongs to the flavin-dependent halogenase family.

The enzyme catalyses griseophenone C + FADH2 + chloride + O2 = griseophenone B + FAD + 2 H2O + H(+). The protein operates within secondary metabolite biosynthesis; terpenoid biosynthesis. Functionally, flavin-dependent halogenase; part of the gene cluster that mediates the biosynthesis of griseofulvin, an important antifungal drug that has been in use for a long time for treating dermatophyte infections. The first step of the pathway is the formation of the heptaketide backbone by gsfA which is initiated by priming with acetyl-CoA, followed by sequential condensations of 6 malonyl-CoA units. The resulting benzophenone can undergo a spontaneous dehydration to form norlichexanthone. However, the true precursor for the griseofulvin biosynthesis is not norlichexanthone, but the heptaketide benzophenone that is O-methylated at 3-OH by gsfB to produce griseophenone D which is further methylated at 9-OH by gsfC to yield griseophenone C. Griseophenone C is then substrate of halogenase gsfI which is responsible for the regio-specific chlorination at the C13 position to form griseophenone B. The cytochrome P450 gsfF catalyzes the coupling of orcinol and phloroglucinol rings in griseophenone B to form desmethyl-dehydrogriseofulvin A which is further methylated at 5-OH by gsfD to yield dehydrogriseofulvin. Finally, gsfE performs stereospecific reduction of enone 18 of dehydrogriseofulvin to afford the final product griseofulvin. This is Flavin-dependent halogenase gsfI from Penicillium aethiopicum.